The following is a 282-amino-acid chain: ATP phosphoribosyltransferase (282 aa).

Belongs to the ATP phosphoribosyltransferase family. Long subfamily. It depends on Mg(2+) as a cofactor.

The protein resides in the cytoplasm. The enzyme catalyses 1-(5-phospho-beta-D-ribosyl)-ATP + diphosphate = 5-phospho-alpha-D-ribose 1-diphosphate + ATP. Its pathway is amino-acid biosynthesis; L-histidine biosynthesis; L-histidine from 5-phospho-alpha-D-ribose 1-diphosphate: step 1/9. Feedback inhibited by histidine. Catalyzes the condensation of ATP and 5-phosphoribose 1-diphosphate to form N'-(5'-phosphoribosyl)-ATP (PR-ATP). Has a crucial role in the pathway because the rate of histidine biosynthesis seems to be controlled primarily by regulation of HisG enzymatic activity. The protein is ATP phosphoribosyltransferase of Pyrobaculum calidifontis (strain DSM 21063 / JCM 11548 / VA1).